The primary structure comprises 410 residues: F-box protein At3g61340 (410 aa).

Positions 17–66 (EEKSERIPFDLVIEILLRLPVKSIARFRYVSKLWQSTLRGQHFTESYLTI) constitute an F-box domain.

This Arabidopsis thaliana (Mouse-ear cress) protein is F-box protein At3g61340.